Consider the following 269-residue polypeptide: MRILLTNDDGIHAPGLGSLERIARMLSDDIWIVAPEYEQSGAGRALTLSDPIRVRRIDPRRFAVEGTPTDCVAMAMQQLIEGPAPDLVLSGVNRGQNLAEDVTLSGTVAGAIEGMAFGIRSIALSQAMTYFHDEVVAHWETAEHFGPGIVQRLLEVGWPKDVIINVNFPAVAPEMVTEVEVTRQGFRDSHMRSMEKRTDLRGRDYYWTGFVVKPSNPAEGTDLKAVYQGRISVTPLHIDLTHNQTVAAMKGALGGTPPRFDQPGLETAS.

Asp8, Asp9, Ser40, and Asn93 together coordinate a divalent metal cation.

This sequence belongs to the SurE nucleotidase family. A divalent metal cation is required as a cofactor.

It localises to the cytoplasm. The catalysed reaction is a ribonucleoside 5'-phosphate + H2O = a ribonucleoside + phosphate. Its function is as follows. Nucleotidase that shows phosphatase activity on nucleoside 5'-monophosphates. The sequence is that of 5'-nucleotidase SurE from Caulobacter sp. (strain K31).